Reading from the N-terminus, the 280-residue chain is Dermonecrotic toxin LsSicTox-alphaIA1 (280 aa).

Residue H12 is part of the active site. Mg(2+)-binding residues include E32 and D34. H48 functions as the Nucleophile in the catalytic mechanism. 2 disulfides stabilise this stretch: C52–C58 and C54–C197. D92 is a binding site for Mg(2+).

The protein belongs to the arthropod phospholipase D family. Class II subfamily. Requires Mg(2+) as cofactor. Expressed by the venom gland.

It localises to the secreted. It catalyses the reaction an N-(acyl)-sphingosylphosphocholine = an N-(acyl)-sphingosyl-1,3-cyclic phosphate + choline. The catalysed reaction is an N-(acyl)-sphingosylphosphoethanolamine = an N-(acyl)-sphingosyl-1,3-cyclic phosphate + ethanolamine. The enzyme catalyses a 1-acyl-sn-glycero-3-phosphocholine = a 1-acyl-sn-glycero-2,3-cyclic phosphate + choline. It carries out the reaction a 1-acyl-sn-glycero-3-phosphoethanolamine = a 1-acyl-sn-glycero-2,3-cyclic phosphate + ethanolamine. In terms of biological role, dermonecrotic toxins cleave the phosphodiester linkage between the phosphate and headgroup of certain phospholipids (sphingolipid and lysolipid substrates), forming an alcohol (often choline) and a cyclic phosphate. This toxin acts on sphingomyelin (SM). It may also act on ceramide phosphoethanolamine (CPE), lysophosphatidylcholine (LPC) and lysophosphatidylethanolamine (LPE), but not on lysophosphatidylserine (LPS), and lysophosphatidylglycerol (LPG). It acts by transphosphatidylation, releasing exclusively cyclic phosphate products as second products. Induces dermonecrosis, hemolysis, increased vascular permeability, edema, inflammatory response, and platelet aggregation. The sequence is that of Dermonecrotic toxin LsSicTox-alphaIA1 from Loxosceles similis (Brazilian brown spider).